We begin with the raw amino-acid sequence, 370 residues long: MSELHYLYGKPTGTADLRTVNSDFIVKEILPFSPSGEGEHHLVHIRKDGLNTVQVAEMLAKFAKVHPKEVTYAGQKDKNAITEQWFGIRIPGKETPAWIELNSDRLTVLSSSRHSKKLRIGALLGNRFILTLRNVTNVEDIISRIEKVSQIGVPNYFGEQRFGHDGKNLVLGRQMLAGKKVKDRNKRSMYLSAVRSHLFNTVVSYRLTHYGTRPLAGDCVMLAGSKSFFVTPEWDLVVLKRLIEKDIQLSAPLWGRGKMLPQGEAAEVETQAMADLTEDCYGLEHAGLEQERRPLLLEPQGLKHEQTSDGLVLEFILPAGCFATSLLRELVDYQDVKELQWQTTLTAETNVVTESNTAAANVSDNGESAS.

Residue aspartate 77 is the Nucleophile of the active site. The TRUD domain maps to 152–297 (GVPNYFGEQR…LEQERRPLLL (146 aa)).

Belongs to the pseudouridine synthase TruD family.

The enzyme catalyses uridine(13) in tRNA = pseudouridine(13) in tRNA. Its function is as follows. Responsible for synthesis of pseudouridine from uracil-13 in transfer RNAs. The sequence is that of tRNA pseudouridine synthase D from Shewanella oneidensis (strain ATCC 700550 / JCM 31522 / CIP 106686 / LMG 19005 / NCIMB 14063 / MR-1).